A 370-amino-acid polypeptide reads, in one-letter code: Anhydro-N-acetylmuramic acid kinase (370 aa).

13 to 20 (GTSMDGID) is a binding site for ATP.

This sequence belongs to the anhydro-N-acetylmuramic acid kinase family.

It carries out the reaction 1,6-anhydro-N-acetyl-beta-muramate + ATP + H2O = N-acetyl-D-muramate 6-phosphate + ADP + H(+). It participates in amino-sugar metabolism; 1,6-anhydro-N-acetylmuramate degradation. Its pathway is cell wall biogenesis; peptidoglycan recycling. In terms of biological role, catalyzes the specific phosphorylation of 1,6-anhydro-N-acetylmuramic acid (anhMurNAc) with the simultaneous cleavage of the 1,6-anhydro ring, generating MurNAc-6-P. Is required for the utilization of anhMurNAc either imported from the medium or derived from its own cell wall murein, and thus plays a role in cell wall recycling. This is Anhydro-N-acetylmuramic acid kinase from Rhizobium etli (strain ATCC 51251 / DSM 11541 / JCM 21823 / NBRC 15573 / CFN 42).